The sequence spans 122 residues: Large ribosomal subunit protein uL18 (122 aa).

The span at 1–11 shows a compositional bias: basic and acidic residues; that stretch reads MLKKPDRNALR. Residues 1-22 form a disordered region; the sequence is MLKKPDRNALRDKRRRRVRKKI. The segment covering 12–22 has biased composition (basic residues); that stretch reads DKRRRRVRKKI.

Belongs to the universal ribosomal protein uL18 family. Part of the 50S ribosomal subunit; part of the 5S rRNA/L5/L18/L25 subcomplex. Contacts the 5S and 23S rRNAs.

Its function is as follows. This is one of the proteins that bind and probably mediate the attachment of the 5S RNA into the large ribosomal subunit, where it forms part of the central protuberance. This chain is Large ribosomal subunit protein uL18, found in Pelotomaculum thermopropionicum (strain DSM 13744 / JCM 10971 / SI).